We begin with the raw amino-acid sequence, 2904 residues long: MSSSASFNEPIAIVGSGCRFAGGASSPSKLWDLLCKPKDIRSDITGRRFNAEGFYHPDGSHHGHMNVLQSYLLEEDTRLFDAEFFGTNPVEAKAMDPQQRLLLEVVYESIESAGLCIERLRGSNTAVFAGLMCGDYEAMMLRDLDQAPTHFATGTSRAVMSNRVSYFFDWRGPSVTIDTACSSSLVAVHYAIQALRSGDSHTAVACGSNLIFGPEMYVIESKLKMLSPDGLGRMWDKDANGYARGEGVTAIILKTLSQALADNDRIEAVIRETGVNSDGTTPGITMPSASAQRDLIQSVYRKAGLDPEAMEDRPQYIEAHGTGTPAGDPIEAEALSTAFFGNTEKASTPIYTGSIKTVLGHTEGSAGIAALMKVTQAIRNAILPPNLWFQQLNPKLKQFYGNLQIPTQALPWPTVSDRRPKRASINNFGFGGTNAHAIVESYEPEPRQTVESPDAATVSTPFVFSAASTESLRSNLAAYATYLDANPKTSAGDLAYTLRERRSVLPFRIAFPDTTVESLKLSITTRLVEPGNESLGVRTWTAGNRGRSRLLGVFTGQGAQYARMGAELVNQAVLAGQLLEKLEGYLSELPEGDRPSWSLRDEMLADGPLSHVGEAAISQPLCTAVQIILVDLLKSAKVKFDTVVGHSSGEIGAAYAAGYLSARDALLIAYFRGLHCKHATSPNGDIKGAMLAAGTSMEDAIEICEAEEFLGRVTVAASNSSSSVTFSGDEDAIDEIAAVLQDENKFNRRLKVDTAYHSSHMLPCFDLYVASLRRAGVKALLGNGECTWISSVYEGRSIDPSTDELSGVYWAHNMTKAVLFSQAVRAAVKIATDNDPYTAVLEVGPHAALAGPAKQNIFEALQKELPYHGTLLRGGNAMTAFSTCLGFLWTHLDTASIDLGSCEAAHSGNKQQFTVLGDLPSYQWKHESAYWAESRKSRQMRLRNQPFHQLLGDVSPDSAPHILRWKNILKPREMTWLEGHQVQSQVVLPAASYVSTAIEAAQSLASGKKIQLIELSNFHIHNAITFDQNDIGIEVHIEVSNIYIKENQVHANFTYSAALGDELNDLVLAANGELKVVLVDETPNISLFPQRQAPPPHMIPVQPSRLYGFMKGLEYDFSGAFQSLIKLERNLGHATCLAQKAKVLVPDADELLVHPIDLDAAFQSVMLAYSYPGDDQLRLLHLPTSIAKLRVNPSVLASQRYAENDMTLIDSTCSTGDRAEPGDGFSGSVNMYAPGFDHAAIQVDRVKFKPVGSDASNDRDVFYKMHWVPSAADGMLAAASVLVGEQDRELMFVLSRIAAYYLRIFDEQLPENDPARSTSPLCHYMNYARHMTNLLKNGQHQWAHQDWLNDTEEDVLDDIVAKGFMENSDVKIMLLVGNTMPRVFKGETTMLEHFRTSGLLDEYYSNGFGTKQSTLWVASILKQLTDRNPHLNMLEIGAGTGGATKTILQSIGHDFGSYTFTDISSSFFENAAETFSDWQDSMVFKVCNAEIDPVQQGFQHGSYDVVIAFMVVHACARLDEAVANLRKLLKPGGLLVLGEGASDGAMQAGAGFIFGTLPGWWRGADEGRTLSPLVNASEWDVILKGSGFSGIDTMSPPTLFNAFGITLFVSTAIDERIEFARNPLAITKSTVYNKVVIVGGRTPPIVQLSREIQEALIPLAKQVLSYASLEDLDENTLEDETVVVSLVDLEAPVFKGITSERWYKFRKLFETKRDILWLTSGRLEDEPYCNMTVGFGRSAMHEEETLRIQYVDVTNVGNFDAQKIAQYLLRFTSARLDDKDILYTKEPEIIIDDEGRELVPRLFTIKASNDRLNSTTRSIFDPVDINKHVVELQYGKDGPNFRQLSRYELSEEPTTPQSDHAELRLTSSTVSAIRCPTGYQFLVVGTDQTGAQRLALTSSLTSLLRIPLESTVLCEHPGLSEANYLGLVAAELSVIAFCDSLFTGQKLAVHNAPASIVRAVLSHVSPKGLSVTFTTDTLGTAVSPDVASQIHIPMFSARSDIEAILPSDIVCFVDFSASIQAENVAMITSCLPSYCRKENVNTIFSPHGIDTSASTAVLGQLLNRAVNIVKERNVSTTPTLLGLKALAHGESGTDPLTIIEWTGCTTVPARVTRFESNQLFKSHKTYWLVGLSGALGISLCDWMIERGVRYLVLTSRNPKIDPRWIRNHERNGVTIKIMLCDVTDEKAINEVHAEIVKTLPPIVGLLNGAMVLRDVSVRNMEFDQVTDVIRPKVLGSIHLDRIFYNIDLDFFVLLSSINCVIGNVGQANYAAANMGMIGVAGNRRKRGLRSSVVNVGAIIGVGYITQSDRQLDVTVAKTAMMHLSEQDFHQIFAECMEASHLDSPNGPEISTGLLSITPETIDIPPWYSDPKFARFRVHKAADTGDKSDATNSASTQDLLQACRSQIEVANVIKQAYCTQLRKMLQVSTVDGDLMMMRGVDLGFDSLLSVDVRSWFLKNFRVSIPVLKIMANDVRMSSLVELAAESIPAELVPGVPQANANPNGPSSPDSDATESSNQNSDVDVTSTRATSPSTPAATSPDSNVKIKTNSSFAVDWKFETIPPEPFALPGLSDAPKPRENPEVVVLTGCSGLLGHHLLNTLIAQPSICKIICLAVRRLSSRLESGDLPAPSERICYYEGDLTSTYFGLDTTTWTSIFHETDAVIHNGSDTSHLKYYSALKQANVESTKQLVSTCLQRMIPLHYISSAGVALFAGLAAFPPISCTQTGKTPPADGSHGYMCGKWVCEKMLERTHEKHRLRIVIQRPSTIIRDGKDATVERAGFDWVNSLLHFAHKTQTVPRVEFNAGAFDLVSVETCCEDVVRELPNRGREGITYVNNVGDVVIPMAQMADVGLSKVEKRYSVLPMEEWTKIVVNAGMHPAVAALIETFDEPGVEKYPALLRSEDA.

The Ketosynthase family 3 (KS3) domain maps to 8–441; that stretch reads NEPIAIVGSG…GTNAHAIVES (434 aa). Catalysis depends on for beta-ketoacyl synthase activity residues cysteine 181, histidine 320, and histidine 361. Positions 553 to 875 are acyl transferase (AT) domain; that stretch reads VFTGQGAQYA…PYHGTLLRGG (323 aa). The segment at 948 to 1081 is N-terminal hotdog fold; it reads HQLLGDVSPD…GELKVVLVDE (134 aa). Residues 948 to 1257 form the PKS/mFAS DH domain; that stretch reads HQLLGDVSPD…FKPVGSDASN (310 aa). Residues 971-1255 form a dehydratase (DH) domain region; it reads PREMTWLEGH…VKFKPVGSDA (285 aa). Histidine 980 (proton acceptor; for dehydratase activity) is an active-site residue. The C-terminal hotdog fold stretch occupies residues 1098–1257; sequence MIPVQPSRLY…FKPVGSDASN (160 aa). The Proton donor; for dehydratase activity role is filled by aspartate 1159. Positions 1411–1596 are methyltransferase (cMeT) domain; sequence KQSTLWVASI…GFSGIDTMSP (186 aa). Residues 2125-2298 form a ketoreductase (KR)domain region; the sequence is TYWLVGLSGA…RSSVVNVGAI (174 aa). The Carrier domain maps to 2407–2486; the sequence is EVANVIKQAY…SLVELAAESI (80 aa). The residue at position 2445 (serine 2445) is an O-(pantetheine 4'-phosphoryl)serine. A disordered region spans residues 2492-2543; the sequence is PGVPQANANPNGPSSPDSDATESSNQNSDVDVTSTRATSPSTPAATSPDSNV. Over residues 2497 to 2523 the composition is skewed to polar residues; the sequence is ANANPNGPSSPDSDATESSNQNSDVDV. Positions 2524–2541 are enriched in low complexity; sequence TSTRATSPSTPAATSPDS. The tract at residues 2585–2817 is reductase (R) domain; the sequence is LTGCSGLLGH…DLVSVETCCE (233 aa).

The cofactor is pantetheine 4'-phosphate.

The catalysed reaction is 7 malonyl-CoA + acetyl-CoA + 10 AH2 + 5 S-adenosyl-L-methionine + 2 H(+) = dehydroprobetaenone I + 10 A + 5 S-adenosyl-L-homocysteine + 7 CO2 + 8 CoA + 6 H2O. Its pathway is mycotoxin biosynthesis. Functionally, highly reducing polyketide synthase; part of the gene cluster that mediates the biosynthesis of betaenones, phytotoxic polyketides involved in leaf spot disease in sugar beets. The first step of the pathway is the synthesis of dehydroprobetaenone I by the polyketide synthase bet1 and the enoyl reductase bet3 via condensation of one acetyl-CoA starter unit with 7 malonyl-CoA units and 5 methylations. The C-terminal reductase (R) domain of bet1 catalyzes the reductive release of the polyketide chain. Because bet1 lacks a designated enoylreductase (ER) domain, the required activity is provided the enoyl reductase bet3. The short-chain dehydrogenase/reductase bet4 then catalyzes reduction of dehydroprobetaenone I to probetaenone I. The cytochrome P450 monooxygenase bet2 catalyzes successive epoxidation, oxidation (resulting from epoxide opening) and hydroxylation to install a tertiary alcohol in the decaline ring to yield betaenone C from dehydroprobetaenone I and betaenone B from probetaenone I. The FAD-linked oxidoreductase (orf1) is probably responsible for the conversion of betaenone C to betaenone A via an intramolecular aldol reaction between C-1 and C-17 to form the bridged tricyclic system in betaenone A. This is Highly reducing polyketide synthase bet1 from Neocamarosporium betae (Beet black rot fungus).